The primary structure comprises 376 residues: Queuine tRNA-ribosyltransferase accessory subunit 2 (376 aa).

C323, C325, C328, and H354 together coordinate Zn(2+).

The protein belongs to the queuine tRNA-ribosyltransferase family. QTRT2 subfamily. Heterodimer of a catalytic subunit and an accessory subunit. It depends on Zn(2+) as a cofactor.

Its subcellular location is the cytoplasm. In terms of biological role, non-catalytic subunit of the queuine tRNA-ribosyltransferase (TGT) that catalyzes the base-exchange of a guanine (G) residue with queuine (Q) at position 34 (anticodon wobble position) in tRNAs with GU(N) anticodons (tRNA-Asp, -Asn, -His and -Tyr), resulting in the hypermodified nucleoside queuosine (7-(((4,5-cis-dihydroxy-2-cyclopenten-1-yl)amino)methyl)-7-deazaguanosine). This chain is Queuine tRNA-ribosyltransferase accessory subunit 2, found in Caenorhabditis briggsae.